An 837-amino-acid chain; its full sequence is Periplasmic nitrate reductase (837 aa).

Positions 1-33 (MTTPKLDRRQVLKLEAAAMAALAGGIAMPAAAA) form a signal peptide, tat-type signal. Residues 44–100 (LKWDKAACRFCGTGCSVMVATKENRVVATHGDTKSEVNRGLNCVKGYFLSKIMYGHD) enclose the 4Fe-4S Mo/W bis-MGD-type domain. [4Fe-4S] cluster-binding residues include Cys51, Cys54, Cys58, and Cys86. Mo-bis(molybdopterin guanine dinucleotide)-binding positions include Lys88, Gln155, Asn180, Cys184, 217-224 (WGSNMAEM), 248-252 (STFEH), 267-269 (QTD), Met378, Gln382, Asn488, 514-515 (SD), Lys537, Asp564, and 724-733 (TGRVLEHWHS). Residue Trp800 coordinates substrate. Residues Asn808 and Lys825 each coordinate Mo-bis(molybdopterin guanine dinucleotide).

Belongs to the prokaryotic molybdopterin-containing oxidoreductase family. NasA/NapA/NarB subfamily. As to quaternary structure, component of the periplasmic nitrate reductase NapAB complex composed of NapA and NapB. [4Fe-4S] cluster is required as a cofactor. Mo-bis(molybdopterin guanine dinucleotide) serves as cofactor. Post-translationally, predicted to be exported by the Tat system. The position of the signal peptide cleavage has not been experimentally proven.

Its subcellular location is the periplasm. It catalyses the reaction 2 Fe(II)-[cytochrome] + nitrate + 2 H(+) = 2 Fe(III)-[cytochrome] + nitrite + H2O. Its function is as follows. Catalytic subunit of the periplasmic nitrate reductase complex NapAB. Receives electrons from NapB and catalyzes the reduction of nitrate to nitrite. This Rhodopseudomonas palustris (strain BisB18) protein is Periplasmic nitrate reductase.